Reading from the N-terminus, the 392-residue chain is Large ribosomal subunit protein uL3 (392 aa).

Belongs to the universal ribosomal protein uL3 family.

The protein resides in the cytoplasm. The L3 protein is a component of the large subunit of cytoplasmic ribosomes. The chain is Large ribosomal subunit protein uL3 (rpl3) from Aspergillus fumigatus (strain ATCC MYA-4609 / CBS 101355 / FGSC A1100 / Af293) (Neosartorya fumigata).